The sequence spans 101 residues: Interleukin-8 (101 aa).

The first 22 residues, 1-22 (MTSKLAVALLAAFLLSAALCEG), serve as a signal peptide directing secretion. Citrulline is present on Arg27. Cystine bridges form between Cys34-Cys61 and Cys36-Cys77.

Belongs to the intercrine alpha (chemokine CxC) family. As to quaternary structure, homodimer. Interacts with TNFAIP6 (via Link domain); this interaction interferes with chemokine binding to glycosaminoglycans. Post-translationally, citrullination at Arg-27 prevents proteolysis, and dampens tissue inflammation, it also enhances leukocytosis, possibly through impaired chemokine clearance from the blood circulation.

It is found in the secreted. In terms of biological role, chemotactic factor that mediates inflammatory response by attracting neutrophils, basophils, and T-cells to clear pathogens and protect the host from infection. Also plays an important role in neutrophil activation. Released in response to an inflammatory stimulus, exerts its effect by binding to the G-protein-coupled receptors CXCR1 and CXCR2, primarily found in neutrophils, monocytes and endothelial cells. G-protein heterotrimer (alpha, beta, gamma subunits) constitutively binds to CXCR1/CXCR2 receptor and activation by IL8 leads to beta and gamma subunits release from Galpha (GNAI2 in neutrophils) and activation of several downstream signaling pathways including PI3K and MAPK pathways. This is Interleukin-8 (CXCL8) from Macaca mulatta (Rhesus macaque).